The chain runs to 288 residues: Pyridoxal kinase PdxY (288 aa).

Residues serine 10 and 45 to 46 (TQ) contribute to the substrate site. Aspartate 112, alanine 143, glutamate 148, and lysine 181 together coordinate ATP. Aspartate 222 is a binding site for substrate.

Belongs to the pyridoxine kinase family. PdxY subfamily. As to quaternary structure, homodimer. Requires Mg(2+) as cofactor.

It carries out the reaction pyridoxal + ATP = pyridoxal 5'-phosphate + ADP + H(+). Its pathway is cofactor metabolism; pyridoxal 5'-phosphate salvage; pyridoxal 5'-phosphate from pyridoxal: step 1/1. Functionally, pyridoxal kinase involved in the salvage pathway of pyridoxal 5'-phosphate (PLP). Catalyzes the phosphorylation of pyridoxal to PLP. This chain is Pyridoxal kinase PdxY, found in Paraburkholderia xenovorans (strain LB400).